The chain runs to 357 residues: Phosphoribosylformylglycinamidine cyclo-ligase (357 aa).

Belongs to the AIR synthase family.

The protein resides in the cytoplasm. The catalysed reaction is 2-formamido-N(1)-(5-O-phospho-beta-D-ribosyl)acetamidine + ATP = 5-amino-1-(5-phospho-beta-D-ribosyl)imidazole + ADP + phosphate + H(+). It participates in purine metabolism; IMP biosynthesis via de novo pathway; 5-amino-1-(5-phospho-D-ribosyl)imidazole from N(2)-formyl-N(1)-(5-phospho-D-ribosyl)glycinamide: step 2/2. The sequence is that of Phosphoribosylformylglycinamidine cyclo-ligase from Rhizobium leguminosarum bv. trifolii (strain WSM2304).